Here is a 1128-residue protein sequence, read N- to C-terminus: Membrane-associated guanylate kinase, WW and PDZ domain-containing protein 3 (1128 aa).

A PDZ 1 domain is found at 22–108 (WGGPAGPDPE…PVRLKTVRPG (87 aa)). Residues 116 to 290 (RHYLSLQFQK…SMDFRNYMSR (175 aa)) form the Guanylate kinase-like domain. Residue 123–130 (FQKGSIDH) coordinates ATP. The tract at residues 184–276 (TYDGNFYGTP…DWMKPVPSYN (93 aa)) is disordered. Over residues 193–204 (PKPPAEPSPFQP) the composition is skewed to pro residues. Positions 238 to 247 (LPEDEEEEEK) are enriched in acidic residues. Basic and acidic residues predominate over residues 257–267 (ENKEKHSDSSD). WW domains follow at residues 295–328 (EPLP…DPRL) and 341–374 (GELP…NPVL). 2 PDZ domains span residues 412–494 (RTSL…TLCR) and 581–657 (TIPL…LILR). The disordered stretch occupies residues 658-688 (GGPPSPTKTGKMKDKQESSGSLEALSDAIPQ). PDZ domains are found at residues 728 to 810 (DVFL…TVRR) and 852 to 939 (DVCL…VAEE). Disordered regions lie at residues 939-985 (EEHR…GKEV) and 999-1018 (LAQP…SQAQ). 2 stretches are compositionally biased toward polar residues: residues 946 to 956 (SGTNSAKQSPA) and 965 to 974 (AQSSASSTDR). Positions 1024 to 1106 (PVELERGPRG…KVLLLLRPGT (83 aa)) constitute a PDZ 6 domain.

This sequence belongs to the MAGUK family.

It is found in the cell membrane. The protein localises to the cell junction. It localises to the tight junction. Acts as a scaffolding protein at cell-cell junctions, thereby regulating various cellular and signaling processes. This chain is Membrane-associated guanylate kinase, WW and PDZ domain-containing protein 3 (MAGI3), found in Gallus gallus (Chicken).